Here is a 101-residue protein sequence, read N- to C-terminus: MIQQERLLKVLRAPHVSEKATNNTEKSNTIVFKVALDANKVEIANAVEQLFEVKVDSVRTVVVKGKTKRRGAKMGQRSDWKKAYVTLQEGQSLDFVEGAAE.

The protein belongs to the universal ribosomal protein uL23 family. In terms of assembly, part of the 50S ribosomal subunit. Contacts protein L29, and trigger factor when it is bound to the ribosome.

In terms of biological role, one of the early assembly proteins it binds 23S rRNA. One of the proteins that surrounds the polypeptide exit tunnel on the outside of the ribosome. Forms the main docking site for trigger factor binding to the ribosome. The protein is Large ribosomal subunit protein uL23 of Histophilus somni (strain 129Pt) (Haemophilus somnus).